A 336-amino-acid polypeptide reads, in one-letter code: Fructose-1,6-bisphosphatase class 1 (336 aa).

Mg(2+) is bound by residues glutamate 90, aspartate 112, leucine 114, and aspartate 115. Residues 115–118 (DGSS), asparagine 211, and lysine 277 contribute to the substrate site. Residue glutamate 283 participates in Mg(2+) binding.

It belongs to the FBPase class 1 family. As to quaternary structure, homotetramer. The cofactor is Mg(2+).

It localises to the cytoplasm. The enzyme catalyses beta-D-fructose 1,6-bisphosphate + H2O = beta-D-fructose 6-phosphate + phosphate. Its pathway is carbohydrate biosynthesis; gluconeogenesis. This chain is Fructose-1,6-bisphosphatase class 1, found in Pseudomonas putida (strain W619).